Here is a 459-residue protein sequence, read N- to C-terminus: MSNFAIILAAGKGTRMKSDLPKVLHKVAGISMLEHVFRSVGAIQPEKTVTVVGHKAELVEEVLAGQTEFVTQSEQLGTGHAVMMTEPILEGLSGHTLVIAGDTPLITGESLKNLIDFHINHKNVATILTAETDNPFGYGRIVRNDNAEVLRIVEQKDATDFEKQIKEINTGTYVFDNERLFEALKNINTNNAQGEYYITDVIGIFRETGEKVGAYTLKDFDESLGVNDRVALATAESVMRRRINHKHMVNGVSFVNPEATYIDIDVEIAPEVQIEANVTLKGQTKIGAETVLTNGTYVVDSTIGAGAVITNSMIEESSVADGVTVGPYAHIRPNSSLGAQVHIGNFVEVKGSSIGENTKAGHLTYIGNCEVGSNVNFGAGTITVNYDGKNKYKTVIGDNVFVGSNSTIIAPVELGDNSLVGAGSTITKDVPADAIAIGRSRQINKDEYATRLPHHPKNQ.

The interval 1–229 (MSNFAIILAA…FDESLGVNDR (229 aa)) is pyrophosphorylase. UDP-N-acetyl-alpha-D-glucosamine-binding positions include 8–11 (LAAG), Lys22, Gln72, and 77–78 (GT). Asp102 serves as a coordination point for Mg(2+). 4 residues coordinate UDP-N-acetyl-alpha-D-glucosamine: Gly139, Glu154, Asn169, and Asn227. Residue Asn227 coordinates Mg(2+). The linker stretch occupies residues 230–250 (VALATAESVMRRRINHKHMVN). Residues 251 to 459 (GVSFVNPEAT…TRLPHHPKNQ (209 aa)) form an N-acetyltransferase region. UDP-N-acetyl-alpha-D-glucosamine is bound by residues Arg332 and Lys350. His362 (proton acceptor) is an active-site residue. UDP-N-acetyl-alpha-D-glucosamine-binding residues include Tyr365 and Asn376. Acetyl-CoA-binding positions include Ala379, 385–386 (NY), Ser404, Ala422, and Arg439.

The protein in the N-terminal section; belongs to the N-acetylglucosamine-1-phosphate uridyltransferase family. In the C-terminal section; belongs to the transferase hexapeptide repeat family. In terms of assembly, homotrimer. Requires Mg(2+) as cofactor.

The protein resides in the cytoplasm. It carries out the reaction alpha-D-glucosamine 1-phosphate + acetyl-CoA = N-acetyl-alpha-D-glucosamine 1-phosphate + CoA + H(+). It catalyses the reaction N-acetyl-alpha-D-glucosamine 1-phosphate + UTP + H(+) = UDP-N-acetyl-alpha-D-glucosamine + diphosphate. It participates in nucleotide-sugar biosynthesis; UDP-N-acetyl-alpha-D-glucosamine biosynthesis; N-acetyl-alpha-D-glucosamine 1-phosphate from alpha-D-glucosamine 6-phosphate (route II): step 2/2. It functions in the pathway nucleotide-sugar biosynthesis; UDP-N-acetyl-alpha-D-glucosamine biosynthesis; UDP-N-acetyl-alpha-D-glucosamine from N-acetyl-alpha-D-glucosamine 1-phosphate: step 1/1. Its pathway is bacterial outer membrane biogenesis; LPS lipid A biosynthesis. Its function is as follows. Catalyzes the last two sequential reactions in the de novo biosynthetic pathway for UDP-N-acetylglucosamine (UDP-GlcNAc). The C-terminal domain catalyzes the transfer of acetyl group from acetyl coenzyme A to glucosamine-1-phosphate (GlcN-1-P) to produce N-acetylglucosamine-1-phosphate (GlcNAc-1-P), which is converted into UDP-GlcNAc by the transfer of uridine 5-monophosphate (from uridine 5-triphosphate), a reaction catalyzed by the N-terminal domain. In Streptococcus pneumoniae (strain 70585), this protein is Bifunctional protein GlmU.